We begin with the raw amino-acid sequence, 93 residues long: Putative pterin-4-alpha-carbinolamine dehydratase (93 aa).

Belongs to the pterin-4-alpha-carbinolamine dehydratase family.

The catalysed reaction is (4aS,6R)-4a-hydroxy-L-erythro-5,6,7,8-tetrahydrobiopterin = (6R)-L-erythro-6,7-dihydrobiopterin + H2O. This Roseiflexus sp. (strain RS-1) protein is Putative pterin-4-alpha-carbinolamine dehydratase.